A 132-amino-acid chain; its full sequence is Riboflavin kinase (132 aa).

10–15 (GLGEGR) contacts CDP. Residues threonine 39 and asparagine 41 each contribute to the Mg(2+) site. Positions 95, 96, and 103 each coordinate FMN. Residue 108-111 (MKLR) participates in CDP binding.

As to quaternary structure, monomer. It depends on Mg(2+) as a cofactor.

The catalysed reaction is riboflavin + CTP = CDP + FMN + H(+). Its pathway is cofactor biosynthesis; FMN biosynthesis; FMN from riboflavin (CTP route): step 1/1. Catalyzes the CTP-dependent phosphorylation of riboflavin (vitamin B2) to form flavin mononucleotide (FMN). Can also utilize UTP as the phosphate donor, although less efficiently, and it is unclear if ATP and GTP can also serve as substrates or not. This Methanocaldococcus jannaschii (strain ATCC 43067 / DSM 2661 / JAL-1 / JCM 10045 / NBRC 100440) (Methanococcus jannaschii) protein is Riboflavin kinase (ribK).